Consider the following 1496-residue polypeptide: Synaptojanin-2 (1496 aa).

An SAC domain is found at 120 to 444 (LKKILSSGVF…GHGLSKVFTG (325 aa)). The 80-residue stretch at 906–985 (DATVIVNLQS…RAVKIRPKTK (80 aa)) folds into the RRM domain. Disordered stretches follow at residues 1047-1083 (VVSD…HPTY), 1100-1149 (GNFR…GTHG), 1205-1357 (VPES…LQVL), 1393-1413 (SSAI…AASF), 1442-1461 (EPLD…SAQV), and 1468-1496 (RGLP…TLGV). Low complexity predominate over residues 1063 to 1074 (SASTPASKSPAL). A compositionally biased stretch (pro residues) spans 1116 to 1130 (RPRPPHPPQRPPPPT). Phosphoserine is present on serine 1139. Polar residues predominate over residues 1139–1149 (SDASISSGTHG). Pro residues-rich tracts occupy residues 1230-1239 (PVLPRRPVPR) and 1279-1292 (TPPP…PVPK). Low complexity predominate over residues 1324–1338 (ELSSPEAPEAPSLAP). 2 stretches are compositionally biased toward basic and acidic residues: residues 1470 to 1480 (LPPDHGGKDFS) and 1487 to 1496 (NKDKRTTLGV).

It belongs to the synaptojanin family. In the central section; belongs to the inositol 1,4,5-trisphosphate 5-phosphatase family. Binds to GRB2. Isoform 2A binds to SYNJ2BP/OMP25. Widely expressed. Isoforms 2B1 and 2B2 are concentrated at nerve terminals in brain and at spermatid manchette in testis.

It localises to the cytoplasm. Its subcellular location is the cell membrane. The protein resides in the presynapse. The protein localises to the cytoskeleton. It is found in the membrane raft. It localises to the mitochondrion. The catalysed reaction is a 1,2-diacyl-sn-glycero-3-phospho-(1D-myo-inositol-4,5-bisphosphate) + H2O = a 1,2-diacyl-sn-glycero-3-phospho-(1D-myo-inositol 4-phosphate) + phosphate. Functionally, inositol 5-phosphatase which may be involved in distinct membrane trafficking and signal transduction pathways. May mediate the inhibitory effect of Rac1 on endocytosis. The chain is Synaptojanin-2 (Synj2) from Rattus norvegicus (Rat).